A 326-amino-acid polypeptide reads, in one-letter code: High-affinity zinc uptake system protein ZnuA (326 aa).

Positions 1–22 are cleaved as a signal peptide; that stretch reads MIRPSSLVLAAALGTAALPARA. H59 serves as a coordination point for Zn(2+). Positions 117 to 155 are enriched in basic and acidic residues; it reads GGEHEHEHEHEHEHEHEHEHDGHGHAEEQAHHDHDHSGT. The interval 117 to 161 is disordered; the sequence is GGEHEHEHEHEHEHEHEHEHDGHGHAEEQAHHDHDHSGTDPHAWL. H158, H222, and D295 together coordinate Zn(2+). A disulfide bond links C267 and C322.

The protein belongs to the bacterial solute-binding protein 9 family. Monomer.

The protein resides in the periplasm. In terms of biological role, part of the ATP-binding cassette (ABC) transport system ZnuABC involved in zinc import. Binds zinc with high affinity and specificity and delivers it to the membrane permease for translocation into the cytoplasm. This is High-affinity zinc uptake system protein ZnuA from Paracoccus denitrificans (strain Pd 1222).